Here is a 309-residue protein sequence, read N- to C-terminus: MANLTIVTEFILMGFSTNKNMCILHSILFLLIYLCALMGNVLIIMITTLDHHLHTPVYFFLKNLSFLDLCLISVTAPKSIANSLIHNNSISFLGCVSQVFLLLSSASAELLLLTVMSFDRYTAICHPLHYDVIMDRSTCVQRATVSWLYGGLIAVMHTAGTFSLSYCGSNMVHQFFCDIPQLLAISCSENLIREIALILINVVLDFCCFIVIIITYVHVFSTVKKIPSTEGQSKAYSICLPHLLVVLFLSTGFIAYLKPASESPSILDAVISVFYTMLPPTFNPIIYSLRNKAIKVALGMLIKGKLTKK.

Residues 1–23 (MANLTIVTEFILMGFSTNKNMCI) lie on the Extracellular side of the membrane. Asparagine 3 is a glycosylation site (N-linked (GlcNAc...) asparagine). The chain crosses the membrane as a helical span at residues 24 to 44 (LHSILFLLIYLCALMGNVLII). Residues 45–52 (MITTLDHH) are Cytoplasmic-facing. The chain crosses the membrane as a helical span at residues 53–73 (LHTPVYFFLKNLSFLDLCLIS). The Extracellular segment spans residues 74–97 (VTAPKSIANSLIHNNSISFLGCVS). A glycan (N-linked (GlcNAc...) asparagine) is linked at asparagine 87. An intrachain disulfide couples cysteine 95 to cysteine 187. The chain crosses the membrane as a helical span at residues 98–118 (QVFLLLSSASAELLLLTVMSF). Topologically, residues 119–131 (DRYTAICHPLHYD) are cytoplasmic. A helical membrane pass occupies residues 132–152 (VIMDRSTCVQRATVSWLYGGL). The Extracellular portion of the chain corresponds to 153–194 (IAVMHTAGTFSLSYCGSNMVHQFFCDIPQLLAISCSENLIRE). The chain crosses the membrane as a helical span at residues 195–215 (IALILINVVLDFCCFIVIIIT). At 216–235 (YVHVFSTVKKIPSTEGQSKA) the chain is on the cytoplasmic side. Residues 236–255 (YSICLPHLLVVLFLSTGFIA) form a helical membrane-spanning segment. Residues 256-268 (YLKPASESPSILD) are Extracellular-facing. The chain crosses the membrane as a helical span at residues 269 to 289 (AVISVFYTMLPPTFNPIIYSL). Topologically, residues 290–309 (RNKAIKVALGMLIKGKLTKK) are cytoplasmic.

It belongs to the G-protein coupled receptor 1 family.

The protein resides in the cell membrane. In terms of biological role, odorant receptor. The sequence is that of Olfactory receptor 14A16 (OR14A16) from Homo sapiens (Human).